We begin with the raw amino-acid sequence, 209 residues long: MTSGDDAVAAAAERARQTAARNIPVFDDLPLPSDTANLREGVDLDDALLALLPLIGVWRGEGEGRDAHGDYRFGQQIIVSHDGADYLNWEARSWRLDDGGDYDRRDLRETGFWRFVNDPNDPGESQAIELLLAHSSGYIELFYGRPLNQASWELVTDALARSKSGVLVGGAKRLYGIIEGGDLAYVEERVDADGGLVPHLSARLSRFVG.

Residues 56–62 (GVWRGEG) carry the GXWXGXG motif. Heme b is bound by residues K172 and H199.

This sequence belongs to the nitrobindin family. Homodimer. Requires heme b as cofactor.

It carries out the reaction peroxynitrite = nitrate. It functions in the pathway nitrogen metabolism. Functionally, heme-binding protein able to scavenge peroxynitrite and to protect free L-tyrosine against peroxynitrite-mediated nitration, by acting as a peroxynitrite isomerase that converts peroxynitrite to nitrate. Therefore, this protein likely plays a role in peroxynitrite sensing and in the detoxification of reactive nitrogen and oxygen species (RNS and ROS, respectively). Is able to bind nitric oxide (NO) in vitro, but may act as a sensor of peroxynitrite levels in vivo. In Mycolicibacterium gilvum (strain PYR-GCK) (Mycobacterium gilvum (strain PYR-GCK)), this protein is Peroxynitrite isomerase 2.